Here is a 402-residue protein sequence, read N- to C-terminus: S-adenosylmethionine synthase (402 aa).

137–142 (GQGSAD) serves as a coordination point for ATP.

It belongs to the AdoMet synthase 2 family. The cofactor is Mg(2+).

It catalyses the reaction L-methionine + ATP + H2O = S-adenosyl-L-methionine + phosphate + diphosphate. The protein operates within amino-acid biosynthesis; S-adenosyl-L-methionine biosynthesis; S-adenosyl-L-methionine from L-methionine: step 1/1. Its function is as follows. Catalyzes the formation of S-adenosylmethionine from methionine and ATP. In Pyrobaculum islandicum (strain DSM 4184 / JCM 9189 / GEO3), this protein is S-adenosylmethionine synthase.